Consider the following 649-residue polypeptide: Echinoderm microtubule-associated protein-like 2 (649 aa).

Positions 10 to 649 (KEVIFSMEEG…DTSVLQWRVA (640 aa)) are tandem atypical propeller in EMLs. 12 WD repeats span residues 56–93 (KLDW…LYSV), 97–144 (RQRH…VWDS), 151–192 (HVLG…VWDW), 195–234 (ESKV…FWSL), 241–280 (KRQG…VWGK), 285–323 (ITQE…LWGS), 369–406 (FSLL…LWSS), 410–447 (QPVW…LLDT), 452–489 (LVAI…VYTV), 495–535 (KVSR…YWDP), 564–602 (FGIW…LFSY), and 609–648 (ALSH…QWRV). Positions 65–106 (GRDCRANLYLLPTGEVVYFVASVAVLYSVEEQRQRHYLGHND) form a coiled coil.

It belongs to the WD repeat EMAP family. Interacts with GRID2 and may also interact with GRID1. Interacts with EML3. Binds unpolymerized tubulins via its WD repeat region.

It is found in the cytoplasm. Its subcellular location is the cytoskeleton. It localises to the spindle. In terms of biological role, tubulin binding protein that inhibits microtubule nucleation and growth, resulting in shorter microtubules. The sequence is that of Echinoderm microtubule-associated protein-like 2 (Eml2) from Mus musculus (Mouse).